Consider the following 97-residue polypeptide: Putative pterin-4-alpha-carbinolamine dehydratase (97 aa).

Belongs to the pterin-4-alpha-carbinolamine dehydratase family.

It carries out the reaction (4aS,6R)-4a-hydroxy-L-erythro-5,6,7,8-tetrahydrobiopterin = (6R)-L-erythro-6,7-dihydrobiopterin + H2O. This is Putative pterin-4-alpha-carbinolamine dehydratase from Rhizorhabdus wittichii (strain DSM 6014 / CCUG 31198 / JCM 15750 / NBRC 105917 / EY 4224 / RW1) (Sphingomonas wittichii).